The following is a 233-amino-acid chain: tRNA pseudouridine synthase B (233 aa).

The active-site Nucleophile is Asp-48.

Belongs to the pseudouridine synthase TruB family. Type 1 subfamily.

It carries out the reaction uridine(55) in tRNA = pseudouridine(55) in tRNA. Its function is as follows. Responsible for synthesis of pseudouridine from uracil-55 in the psi GC loop of transfer RNAs. This chain is tRNA pseudouridine synthase B, found in Bacteroides fragilis (strain ATCC 25285 / DSM 2151 / CCUG 4856 / JCM 11019 / LMG 10263 / NCTC 9343 / Onslow / VPI 2553 / EN-2).